The following is a 307-amino-acid chain: MIQSHVSVMLNEMLEALSPKAGESYLDCTFGAGGYSKAILESCNCYVTALDRDPNVIKRAEEIQQSYGERFDFVETNFADSFAKLKEKKFDGIVLDLGVSSMQLDIADRGFSFLHNGPLDMRMSGQGLSAEEFVNAAEEKELADVIYKYGDESFSRRIAKRIVEYRKTARIDSTSKLAEIVRSSIGFRKGKIDPATKTFQAIRIYVNDELGELEQFLVNVKNILKKDGRLVVVSFHSLEDRIVKNFFKENSEKPVVRSKYAKDDMTIDPNKWLKIITNKALAPSDKEVGLNIRARSAKLRAAKAIYE.

Residues 33 to 35 (GGY), Asp51, Phe82, Asp96, and Gln103 each bind S-adenosyl-L-methionine.

The protein belongs to the methyltransferase superfamily. RsmH family.

Its subcellular location is the cytoplasm. The catalysed reaction is cytidine(1402) in 16S rRNA + S-adenosyl-L-methionine = N(4)-methylcytidine(1402) in 16S rRNA + S-adenosyl-L-homocysteine + H(+). Specifically methylates the N4 position of cytidine in position 1402 (C1402) of 16S rRNA. The chain is Ribosomal RNA small subunit methyltransferase H from Rickettsia africae (strain ESF-5).